We begin with the raw amino-acid sequence, 466 residues long: Cysteine--tRNA ligase (466 aa).

Cysteine 28 lines the Zn(2+) pocket. The short motif at 30-40 (PTVYNFFHIGN) is the 'HIGH' region element. The Zn(2+) site is built by cysteine 208, histidine 233, and glutamate 237. Residues 265–269 (KMSKS) carry the 'KMSKS' region motif. Position 268 (lysine 268) interacts with ATP.

The protein belongs to the class-I aminoacyl-tRNA synthetase family. In terms of assembly, monomer. Zn(2+) serves as cofactor.

The protein localises to the cytoplasm. It catalyses the reaction tRNA(Cys) + L-cysteine + ATP = L-cysteinyl-tRNA(Cys) + AMP + diphosphate. The polypeptide is Cysteine--tRNA ligase (Clostridium perfringens (strain SM101 / Type A)).